The primary structure comprises 483 residues: CBL-interacting serine/threonine-protein kinase 19 (483 aa).

The 255-residue stretch at 28–282 folds into the Protein kinase domain; the sequence is YEMGRLLGHG…MPDIMETSWF (255 aa). ATP is bound by residues 34–42 and K57; that span reads LGHGTFAKV. D150 functions as the Proton acceptor in the catalytic mechanism. The tract at residues 168–197 is activation loop; the sequence is DFGLSAVSDQIRQDGLFHTFCGTPAYVAPE. A Phosphoserine modification is found at S172. Position 186 is a phosphothreonine (T186). The span at 313-322 shows a compositional bias: polar residues; the sequence is SVSGRSSTVS. Residues 313–338 are disordered; the sequence is SVSGRSSTVSEPEDFESFDGRRRGGS. In terms of domain architecture, NAF spans 340–364; that stretch reads PRPASLNAFDLISFSPGFDLSGLFE. The segment at 367-396 is PPI; that stretch reads GEGSRFVSGAPVGQIISKLEEIARIVSFTV. A disordered region spans residues 459–483; sequence NLSSENGQRVSGSRSLPSFLLSDTD.

This sequence belongs to the protein kinase superfamily. CAMK Ser/Thr protein kinase family. SNF1 subfamily. Mn(2+) is required as a cofactor.

It catalyses the reaction L-seryl-[protein] + ATP = O-phospho-L-seryl-[protein] + ADP + H(+). It carries out the reaction L-threonyl-[protein] + ATP = O-phospho-L-threonyl-[protein] + ADP + H(+). In terms of biological role, CIPK serine-threonine protein kinases interact with CBL proteins. Binding of a CBL protein to the regulatory NAF domain of CIPK protein lead to the activation of the kinase in a calcium-dependent manner. In Arabidopsis thaliana (Mouse-ear cress), this protein is CBL-interacting serine/threonine-protein kinase 19 (CIPK19).